The primary structure comprises 389 residues: Probable dual-specificity RNA methyltransferase RlmN (389 aa).

Glu114 functions as the Proton acceptor in the catalytic mechanism. Positions 120 to 358 (QHYGLSVCVT…CVVRQEHGTD (239 aa)) constitute a Radical SAM core domain. Cys127 and Cys363 are joined by a disulfide. [4Fe-4S] cluster is bound by residues Cys134, Cys138, and Cys141. Residues 186–187 (GE), Ser218, 241–243 (SLH), and Asn319 contribute to the S-adenosyl-L-methionine site. The active-site S-methylcysteine intermediate is Cys363. The interval 370–389 (TMKRDRQKAVAEASGKSEGK) is disordered. The span at 371 to 389 (MKRDRQKAVAEASGKSEGK) shows a compositional bias: basic and acidic residues.

This sequence belongs to the radical SAM superfamily. RlmN family. Requires [4Fe-4S] cluster as cofactor.

Its subcellular location is the cytoplasm. The enzyme catalyses adenosine(2503) in 23S rRNA + 2 reduced [2Fe-2S]-[ferredoxin] + 2 S-adenosyl-L-methionine = 2-methyladenosine(2503) in 23S rRNA + 5'-deoxyadenosine + L-methionine + 2 oxidized [2Fe-2S]-[ferredoxin] + S-adenosyl-L-homocysteine. It carries out the reaction adenosine(37) in tRNA + 2 reduced [2Fe-2S]-[ferredoxin] + 2 S-adenosyl-L-methionine = 2-methyladenosine(37) in tRNA + 5'-deoxyadenosine + L-methionine + 2 oxidized [2Fe-2S]-[ferredoxin] + S-adenosyl-L-homocysteine. Its function is as follows. Specifically methylates position 2 of adenine 2503 in 23S rRNA and position 2 of adenine 37 in tRNAs. This Streptococcus thermophilus (strain ATCC BAA-250 / LMG 18311) protein is Probable dual-specificity RNA methyltransferase RlmN.